The sequence spans 380 residues: Acyl-lipid (9+3)-(E)-desaturase (380 aa).

The tract at residues 1 to 25 (MGAGGCISVSETKPNQKNSLERAPY) is disordered. The span at 9 to 18 (VSETKPNQKN) shows a compositional bias: polar residues. The next 2 helical transmembrane spans lie at 52 to 72 (LSYV…TTYF) and 81 to 101 (ALAW…VWVI). The short motif at 103 to 107 (HECGH) is the Histidine box-1 element. The Histidine box-2 motif lies at 139-143 (HRRHH). Helical transmembrane passes span 177 to 197 (IGVL…FNVS), 223 to 243 (IYLS…AAMV), and 247 to 267 (VWLI…LVLV). Positions 313–317 (HIVHH) match the Histidine box-3 motif.

It belongs to the fatty acid desaturase type 1 family.

It is found in the membrane. The enzyme catalyses a (9Z)-octadecenoyl-containing glycerolipid + 2 Fe(II)-[cytochrome b5] + O2 + 2 H(+) = a (9Z,12E)-octadecadienoyl-containing glycerolipid + 2 Fe(III)-[cytochrome b5] + 2 H2O. It carries out the reaction a (9Z)-hexadecenoyl-containing glycerolipid + 2 Fe(II)-[cytochrome b5] + O2 + 2 H(+) = a (9Z,12E)-hexadecadienoyl-containing glycerolipid + 2 Fe(III)-[cytochrome b5] + 2 H2O. Its function is as follows. Involved in the biosynthesis of dimorphecolic acid (9-OH-18:2(10E,12E)). Converts oleic acid (18:1(9Z)) into 18:2(9Z,12E) and probably palmitoleic acid (16:1(9Z)) into 16:2(9Z,12E). Very limited ability to catalyze (Z)-delta(12) desaturation. The sequence is that of Acyl-lipid (9+3)-(E)-desaturase from Dimorphotheca sinuata (African daisy).